A 148-amino-acid polypeptide reads, in one-letter code: Large ribosomal subunit protein bL9 (148 aa).

Belongs to the bacterial ribosomal protein bL9 family.

In terms of biological role, binds to the 23S rRNA. The protein is Large ribosomal subunit protein bL9 of Parabacteroides distasonis (strain ATCC 8503 / DSM 20701 / CIP 104284 / JCM 5825 / NCTC 11152).